The following is a 168-amino-acid chain: Peptide deformylase (168 aa).

Residues C92 and H134 each coordinate Fe cation. E135 is an active-site residue. H138 serves as a coordination point for Fe cation.

It belongs to the polypeptide deformylase family. Fe(2+) serves as cofactor.

It carries out the reaction N-terminal N-formyl-L-methionyl-[peptide] + H2O = N-terminal L-methionyl-[peptide] + formate. Removes the formyl group from the N-terminal Met of newly synthesized proteins. Requires at least a dipeptide for an efficient rate of reaction. N-terminal L-methionine is a prerequisite for activity but the enzyme has broad specificity at other positions. The sequence is that of Peptide deformylase from Azotobacter vinelandii (strain DJ / ATCC BAA-1303).